The sequence spans 315 residues: 4-hydroxy-3-methylbut-2-enyl diphosphate reductase (315 aa).

Residue Cys12 coordinates [4Fe-4S] cluster. 2 residues coordinate (2E)-4-hydroxy-3-methylbut-2-enyl diphosphate: His41 and His74. His41 and His74 together coordinate dimethylallyl diphosphate. Residues His41 and His74 each coordinate isopentenyl diphosphate. A [4Fe-4S] cluster-binding site is contributed by Cys96. His124 lines the (2E)-4-hydroxy-3-methylbut-2-enyl diphosphate pocket. His124 lines the dimethylallyl diphosphate pocket. His124 contributes to the isopentenyl diphosphate binding site. The active-site Proton donor is Glu126. (2E)-4-hydroxy-3-methylbut-2-enyl diphosphate is bound at residue Thr168. Cys198 is a [4Fe-4S] cluster binding site. The (2E)-4-hydroxy-3-methylbut-2-enyl diphosphate site is built by Ser226, Ser227, Asn228, and Ser270. 4 residues coordinate dimethylallyl diphosphate: Ser226, Ser227, Asn228, and Ser270. Ser226, Ser227, Asn228, and Ser270 together coordinate isopentenyl diphosphate.

Belongs to the IspH family. The cofactor is [4Fe-4S] cluster.

The enzyme catalyses isopentenyl diphosphate + 2 oxidized [2Fe-2S]-[ferredoxin] + H2O = (2E)-4-hydroxy-3-methylbut-2-enyl diphosphate + 2 reduced [2Fe-2S]-[ferredoxin] + 2 H(+). It carries out the reaction dimethylallyl diphosphate + 2 oxidized [2Fe-2S]-[ferredoxin] + H2O = (2E)-4-hydroxy-3-methylbut-2-enyl diphosphate + 2 reduced [2Fe-2S]-[ferredoxin] + 2 H(+). It participates in isoprenoid biosynthesis; dimethylallyl diphosphate biosynthesis; dimethylallyl diphosphate from (2E)-4-hydroxy-3-methylbutenyl diphosphate: step 1/1. It functions in the pathway isoprenoid biosynthesis; isopentenyl diphosphate biosynthesis via DXP pathway; isopentenyl diphosphate from 1-deoxy-D-xylulose 5-phosphate: step 6/6. Functionally, catalyzes the conversion of 1-hydroxy-2-methyl-2-(E)-butenyl 4-diphosphate (HMBPP) into a mixture of isopentenyl diphosphate (IPP) and dimethylallyl diphosphate (DMAPP). Acts in the terminal step of the DOXP/MEP pathway for isoprenoid precursor biosynthesis. This Pseudomonas fluorescens (strain ATCC BAA-477 / NRRL B-23932 / Pf-5) protein is 4-hydroxy-3-methylbut-2-enyl diphosphate reductase.